Reading from the N-terminus, the 152-residue chain is Deoxyuridine 5'-triphosphate nucleotidohydrolase (152 aa).

Residues 71–73 (RSG), asparagine 84, 88–90 (LID), and methionine 98 each bind substrate.

Belongs to the dUTPase family. Mg(2+) serves as cofactor.

It catalyses the reaction dUTP + H2O = dUMP + diphosphate + H(+). The protein operates within pyrimidine metabolism; dUMP biosynthesis; dUMP from dCTP (dUTP route): step 2/2. Its function is as follows. This enzyme is involved in nucleotide metabolism: it produces dUMP, the immediate precursor of thymidine nucleotides and it decreases the intracellular concentration of dUTP so that uracil cannot be incorporated into DNA. This Citrobacter koseri (strain ATCC BAA-895 / CDC 4225-83 / SGSC4696) protein is Deoxyuridine 5'-triphosphate nucleotidohydrolase.